Consider the following 71-residue polypeptide: Small ribosomal subunit protein bS21 (71 aa).

Positions 43–71 (TERKRAKASAVKRHAKKLARENARRTRLY) are disordered. The span at 46-59 (KRAKASAVKRHAKK) shows a compositional bias: basic residues. Positions 60–71 (LARENARRTRLY) are enriched in basic and acidic residues.

It belongs to the bacterial ribosomal protein bS21 family.

This is Small ribosomal subunit protein bS21 from Edwardsiella ictaluri (strain 93-146).